Reading from the N-terminus, the 384-residue chain is S-adenosylmethionine synthase (384 aa).

His-15 contributes to the ATP binding site. Asp-17 contributes to the Mg(2+) binding site. Glu-43 provides a ligand contact to K(+). Positions 56 and 99 each coordinate L-methionine. The flexible loop stretch occupies residues 99-109; it reads QSPDINQGVDR. ATP contacts are provided by residues 164-166, 230-231, Asp-239, 245-246, Ala-262, and Lys-266; these read DAK, RF, and RK. L-methionine is bound at residue Asp-239. Lys-270 lines the L-methionine pocket.

This sequence belongs to the AdoMet synthase family. Homotetramer; dimer of dimers. Mg(2+) is required as a cofactor. Requires K(+) as cofactor.

Its subcellular location is the cytoplasm. The enzyme catalyses L-methionine + ATP + H2O = S-adenosyl-L-methionine + phosphate + diphosphate. It participates in amino-acid biosynthesis; S-adenosyl-L-methionine biosynthesis; S-adenosyl-L-methionine from L-methionine: step 1/1. Its function is as follows. Catalyzes the formation of S-adenosylmethionine (AdoMet) from methionine and ATP. The overall synthetic reaction is composed of two sequential steps, AdoMet formation and the subsequent tripolyphosphate hydrolysis which occurs prior to release of AdoMet from the enzyme. The sequence is that of S-adenosylmethionine synthase from Serratia proteamaculans (strain 568).